The following is an 801-amino-acid chain: tRNA(Met) cytidine acetyltransferase TmcA (801 aa).

ATP is bound by residues Gln228, 256–265 (GRGKSSAVGL), and Arg412. Residues 457-637 (EELFLKNEEE…YTVIVVKPLS (181 aa)) form the N-acetyltransferase domain. Acetyl-CoA is bound by residues 562–564 (IAT), 569–575 (MGKGLGS), and Glu602.

Belongs to the RNA cytidine acetyltransferase family. TmcA subfamily.

The protein localises to the cytoplasm. The enzyme catalyses cytidine(34) in elongator tRNA(Met) + acetyl-CoA + ATP + H2O = N(4)-acetylcytidine(34) in elongator tRNA(Met) + ADP + phosphate + CoA + H(+). In terms of biological role, catalyzes the formation of N(4)-acetylcytidine (ac(4)C) at the wobble position of tRNA(Met), by using acetyl-CoA as an acetyl donor and ATP (or GTP). The sequence is that of tRNA(Met) cytidine acetyltransferase TmcA from Thermofilum pendens (strain DSM 2475 / Hrk 5).